A 79-amino-acid chain; its full sequence is Probable 26S proteasome complex subunit sem1 (79 aa).

Over residues 1 to 21 (MSAPDKEKEKEKEETNNKSED) the composition is skewed to basic and acidic residues. The disordered stretch occupies residues 1 to 30 (MSAPDKEKEKEKEETNNKSEDLGLLEEDDE). Ser-19 carries the phosphoserine modification.

This sequence belongs to the DSS1/SEM1 family. In terms of assembly, part of the 26S proteasome.

Subunit of the 26S proteasome which plays a role in ubiquitin-dependent proteolysis. The sequence is that of Probable 26S proteasome complex subunit sem1 from Drosophila melanogaster (Fruit fly).